The sequence spans 234 residues: Proteasome subunit alpha (234 aa).

Belongs to the peptidase T1A family. In terms of assembly, the 20S proteasome core is composed of 14 alpha and 14 beta subunits that assemble into four stacked heptameric rings, resulting in a barrel-shaped structure. The two inner rings, each composed of seven catalytic beta subunits, are sandwiched by two outer rings, each composed of seven alpha subunits. The catalytic chamber with the active sites is on the inside of the barrel. Has a gated structure, the ends of the cylinder being occluded by the N-termini of the alpha-subunits. Is capped by the proteasome-associated ATPase, ARC.

It localises to the cytoplasm. It participates in protein degradation; proteasomal Pup-dependent pathway. With respect to regulation, the formation of the proteasomal ATPase ARC-20S proteasome complex, likely via the docking of the C-termini of ARC into the intersubunit pockets in the alpha-rings, may trigger opening of the gate for substrate entry. Interconversion between the open-gate and close-gate conformations leads to a dynamic regulation of the 20S proteasome proteolysis activity. Its function is as follows. Component of the proteasome core, a large protease complex with broad specificity involved in protein degradation. This chain is Proteasome subunit alpha, found in Acidothermus cellulolyticus (strain ATCC 43068 / DSM 8971 / 11B).